We begin with the raw amino-acid sequence, 356 residues long: Popeye domain-containing protein 1 (356 aa).

Topologically, residues 1–48 are extracellular; the sequence is MNFTEPSPLAQSTVVGFLPELESLTPVPSNETSCENWREVHHLVFHAA. N-linked (GlcNAc...) asparagine glycans are attached at residues N2 and N30. A helical membrane pass occupies residues 49–69; sequence NVCFAVGLLIPTTLHLHMILL. Residue R70 is a topological domain, cytoplasmic. A helical transmembrane segment spans residues 71–91; that stretch reads VMLSIGCTLYVVWATLYRCAL. A topological domain (extracellular) is located at residue D92. A helical transmembrane segment spans residues 93-113; sequence MMIWNSVFLGINILHLSYLLY. Positions 93 to 115 are required for interaction with CAV3; sequence MMIWNSVFLGINILHLSYLLYKK. At 114–356 the chain is on the cytoplasmic side; that stretch reads KKRPVKIEKD…VPVSPAHQLP (243 aa). Residues 136-186 are required for interaction with KCNK2; the sequence is RVPPDLFRRLTGQFCVIQTLKRGQVYATEDKTSVDDRLSILLKGRMKVSYR. Residues S295 and S318 each carry the phosphoserine modification. The segment covering 313–323 has biased composition (low complexity); that stretch reads SSSTASLPMSS. The disordered stretch occupies residues 313–356; sequence SSSTASLPMSSPQQRASPKMKPIEEGLEDDDEVFVPVSPAHQLP.

The protein belongs to the popeye family. In terms of assembly, homodimer. Homodimerization requires the C-terminus cytoplasmic region. Interacts (via the C-terminus cytoplasmic tail) with TJP1. Interacts (via the C-terminus cytoplasmic tail) with ARHGEF25/GEFT (via the DH domain). Interacts (via the C-terminus cytoplasmic tail) with VAMP3. Interacts with KCNK2; the interaction enhances KCNK2 surface expression and is inhibited by cAMP. Interacts with CAV3. In terms of tissue distribution, strongly expressed in heart and skeletal muscle. Weakly expressed in brain, spleen, liver, kidney and lung.

It is found in the lateral cell membrane. Its subcellular location is the cell junction. The protein resides in the tight junction. It localises to the membrane. The protein localises to the cell membrane. It is found in the sarcolemma. Its subcellular location is the caveola. Cell adhesion molecule involved in the establishment and/or maintenance of cell integrity. Involved in the formation and regulation of the tight junction (TJ) paracellular permeability barrier in epithelial cells. Plays a role in VAMP3-mediated vesicular transport and recycling of different receptor molecules through its interaction with VAMP3. Plays a role in the regulation of cell shape and movement by modulating the Rho-family GTPase activity through its interaction with ARHGEF25/GEFT. Induces primordial adhesive contact and aggregation of epithelial cells in a Ca(2+)-independent manner. Important for skeletal muscle and heart development. Also involved in striated muscle regeneration and repair and in the regulation of cell spreading. Important for the maintenance of cardiac function. Plays a regulatory function in heart rate dynamics mediated, at least in part, through cAMP-binding and, probably, by increasing cell surface expression of the potassium channel KCNK2 and enhancing current density. Is a caveolae-associated protein important for the preservation of caveolae structural and functional integrity as well as for heart protection against ischemia injury. In Rattus norvegicus (Rat), this protein is Popeye domain-containing protein 1 (Popdc1).